Consider the following 271-residue polypeptide: Shikimate dehydrogenase (NADP(+)) (271 aa).

Residues 14–16 (SLS) and Thr-61 contribute to the shikimate site. The active-site Proton acceptor is the Lys-65. The shikimate site is built by Asn-86 and Asp-101. NADP(+)-binding positions include 125–129 (GAGGA) and Ile-212. Position 214 (Tyr-214) interacts with shikimate. An NADP(+)-binding site is contributed by Gly-235.

It belongs to the shikimate dehydrogenase family. In terms of assembly, homodimer.

The enzyme catalyses shikimate + NADP(+) = 3-dehydroshikimate + NADPH + H(+). It participates in metabolic intermediate biosynthesis; chorismate biosynthesis; chorismate from D-erythrose 4-phosphate and phosphoenolpyruvate: step 4/7. Functionally, involved in the biosynthesis of the chorismate, which leads to the biosynthesis of aromatic amino acids. Catalyzes the reversible NADPH linked reduction of 3-dehydroshikimate (DHSA) to yield shikimate (SA). The polypeptide is Shikimate dehydrogenase (NADP(+)) (Clostridium perfringens (strain 13 / Type A)).